Here is a 380-residue protein sequence, read N- to C-terminus: MKLGVLGSTGSVGSQTLQVYENFRDEIELVGILANRASEKLLQQAKKYKPKYVVSYQEPAKEWLESLPEGVKYLKGDEGLKAIIEESERLMNAISGIYGIKPAYEVIKAGKTLLASNKESILCLGEIIRKNRERVIPVDSEHNALFQLLSSVKREEVKHVYLTASGGPFKDKSLEELKTASVEEALRHPRWNMGAKITIDSATLMNKGFEMLEAHFLFDFPIENIKVVIHPQSFVHGILELIDNSFLMHTSQTDMKIPIMHALFYPKRKEYPFKKVSLLELSPITFEKVDTTKFKAIDLAKWAGFMGGVYIPVLVGADEEAVNLFLNKKIGFLDIVDLIEQALSEVNIKDPQSVEEILEAVEWGRQKVREIYERKYAGKG.

T9, G10, S11, V12, R36, and N117 together coordinate NADPH. 1-deoxy-D-xylulose 5-phosphate is bound at residue K118. E119 is a binding site for NADPH. D139 is a binding site for Mn(2+). Residues S140, E141, S165, and H188 each coordinate 1-deoxy-D-xylulose 5-phosphate. E141 contributes to the Mn(2+) binding site. G194 lines the NADPH pocket. 4 residues coordinate 1-deoxy-D-xylulose 5-phosphate: S201, N206, K207, and E210. Residue E210 coordinates Mn(2+).

Belongs to the DXR family. The cofactor is Mg(2+). Mn(2+) is required as a cofactor.

The catalysed reaction is 2-C-methyl-D-erythritol 4-phosphate + NADP(+) = 1-deoxy-D-xylulose 5-phosphate + NADPH + H(+). Its pathway is isoprenoid biosynthesis; isopentenyl diphosphate biosynthesis via DXP pathway; isopentenyl diphosphate from 1-deoxy-D-xylulose 5-phosphate: step 1/6. Its function is as follows. Catalyzes the NADPH-dependent rearrangement and reduction of 1-deoxy-D-xylulose-5-phosphate (DXP) to 2-C-methyl-D-erythritol 4-phosphate (MEP). This is 1-deoxy-D-xylulose 5-phosphate reductoisomerase from Aquifex aeolicus (strain VF5).